A 294-amino-acid polypeptide reads, in one-letter code: Probable 2-(5''-triphosphoribosyl)-3'-dephosphocoenzyme-A synthase (294 aa).

The protein belongs to the CitG/MdcB family.

It catalyses the reaction 3'-dephospho-CoA + ATP = 2'-(5''-triphospho-alpha-D-ribosyl)-3'-dephospho-CoA + adenine. The chain is Probable 2-(5''-triphosphoribosyl)-3'-dephosphocoenzyme-A synthase from Streptococcus pyogenes serotype M28 (strain MGAS6180).